Consider the following 458-residue polypeptide: UDP-N-acetylmuramoylalanine--D-glutamate ligase (458 aa).

124 to 130 serves as a coordination point for ATP; the sequence is GSDGKTT.

This sequence belongs to the MurCDEF family.

Its subcellular location is the cytoplasm. The enzyme catalyses UDP-N-acetyl-alpha-D-muramoyl-L-alanine + D-glutamate + ATP = UDP-N-acetyl-alpha-D-muramoyl-L-alanyl-D-glutamate + ADP + phosphate + H(+). The protein operates within cell wall biogenesis; peptidoglycan biosynthesis. Functionally, cell wall formation. Catalyzes the addition of glutamate to the nucleotide precursor UDP-N-acetylmuramoyl-L-alanine (UMA). This Clostridium novyi (strain NT) protein is UDP-N-acetylmuramoylalanine--D-glutamate ligase.